A 519-amino-acid chain; its full sequence is Probable cytosol aminopeptidase (519 aa).

Mn(2+)-binding residues include Lys-251 and Asp-256. The active site involves Lys-263. Residues Asp-274, Asp-333, and Glu-335 each contribute to the Mn(2+) site. Arg-337 is an active-site residue. A compositionally biased stretch (low complexity) spans 487-502 (VAPAAPAAPAAPAARP). The segment at 487–519 (VAPAAPAAPAAPAARPAAKRTGRSQGGLKRTAP) is disordered.

Belongs to the peptidase M17 family. Mn(2+) is required as a cofactor.

The protein resides in the cytoplasm. It carries out the reaction Release of an N-terminal amino acid, Xaa-|-Yaa-, in which Xaa is preferably Leu, but may be other amino acids including Pro although not Arg or Lys, and Yaa may be Pro. Amino acid amides and methyl esters are also readily hydrolyzed, but rates on arylamides are exceedingly low.. The catalysed reaction is Release of an N-terminal amino acid, preferentially leucine, but not glutamic or aspartic acids.. Its function is as follows. Presumably involved in the processing and regular turnover of intracellular proteins. Catalyzes the removal of unsubstituted N-terminal amino acids from various peptides. This chain is Probable cytosol aminopeptidase, found in Verminephrobacter eiseniae (strain EF01-2).